The sequence spans 447 residues: Glutamate--tRNA ligase 1 (447 aa).

Positions 10–20 match the 'HIGH' region motif; sequence PSPTGMLHVGN. The 'KMSKS' region signature appears at 240–244; the sequence is KISKR. ATP is bound at residue K243.

The protein belongs to the class-I aminoacyl-tRNA synthetase family. Glutamate--tRNA ligase type 1 subfamily. Monomer.

The protein resides in the cytoplasm. It carries out the reaction tRNA(Glu) + L-glutamate + ATP = L-glutamyl-tRNA(Glu) + AMP + diphosphate. Functionally, catalyzes the attachment of glutamate to tRNA(Glu) in a two-step reaction: glutamate is first activated by ATP to form Glu-AMP and then transferred to the acceptor end of tRNA(Glu). The polypeptide is Glutamate--tRNA ligase 1 (Rickettsia rickettsii (strain Sheila Smith)).